Reading from the N-terminus, the 527-residue chain is 4-alpha-glucanotransferase (527 aa).

This sequence belongs to the disproportionating enzyme family.

The protein localises to the cytoplasm. The catalysed reaction is Transfers a segment of a (1-&gt;4)-alpha-D-glucan to a new position in an acceptor, which may be glucose or a (1-&gt;4)-alpha-D-glucan.. This chain is 4-alpha-glucanotransferase (malQ), found in Chlamydia muridarum (strain MoPn / Nigg).